Reading from the N-terminus, the 472-residue chain is UDP-glycosyltransferase 2 (472 aa).

UDP-alpha-D-glucose-binding positions include serine 283, 348 to 349 (WA), 366 to 374 (HCGWNSVLE), and 388 to 391 (YAEQ).

This sequence belongs to the UDP-glycosyltransferase family. In terms of tissue distribution, highly expressed in roots. Expressed in leaves and stems.

Glycosyltransferase that possesses isoflavonoids 4'-O- and 7-O-glucosyltransferase activities. Shows a successive glucosylation toward the acceptors producing their corresponding 4',7-O-diglucosides. Can use genistein, formononetin, daidzein, liquiritigenin and naringenin as substrates. Also shows a 3'-O-glucosylation activity in vitro. The polypeptide is UDP-glycosyltransferase 2 (Pueraria montana var. lobata (Kudzu vine)).